A 369-amino-acid polypeptide reads, in one-letter code: Phosphoribosyl pyrophosphate synthase-associated protein 2 (369 aa).

Met-1 is subject to N-acetylmethionine. Thr-5 is subject to Phosphothreonine. Ser-219, Ser-227, and Ser-233 each carry phosphoserine.

The protein belongs to the ribose-phosphate pyrophosphokinase family. In terms of assembly, binds to PRPS1 and PRPS2.

Its function is as follows. Seems to play a negative regulatory role in 5-phosphoribose 1-diphosphate synthesis. This chain is Phosphoribosyl pyrophosphate synthase-associated protein 2 (PRPSAP2), found in Pongo abelii (Sumatran orangutan).